A 219-amino-acid chain; its full sequence is Proteasome subunit beta type-9 (219 aa).

A propeptide spans 1 to 20 (MLRAGAPTAGSFRTKEVHTG) (removed in mature form). Thr-21 (nucleophile) is an active-site residue. N6-acetyllysine is present on residues Lys-53 and Lys-109.

It belongs to the peptidase T1B family. As to quaternary structure, the 26S proteasome consists of a 20S proteasome core and two 19S regulatory subunits. The 20S proteasome core is composed of 28 subunits that are arranged in four stacked rings, resulting in a barrel-shaped structure. The two end rings are each formed by seven alpha subunits, and the two central rings are each formed by seven beta subunits. The catalytic chamber with the active sites is on the inside of the barrel. Component of the immunoproteasome, where it displaces the equivalent housekeeping subunit PSMB6. Component of the spermatoproteasome, a form of the proteasome specifically found in testis. Autocleaved. The resulting N-terminal Thr residue of the mature subunit is responsible for the nucleophile proteolytic activity.

It localises to the cytoplasm. It is found in the nucleus. The catalysed reaction is Cleavage of peptide bonds with very broad specificity.. Its function is as follows. The proteasome is a multicatalytic proteinase complex which is characterized by its ability to cleave peptides with Arg, Phe, Tyr, Leu, and Glu adjacent to the leaving group at neutral or slightly basic pH. The proteasome has an ATP-dependent proteolytic activity. This subunit is involved in antigen processing to generate class I binding peptides. The chain is Proteasome subunit beta type-9 (Psmb9) from Mus platythrix (Flat-haired mouse).